The chain runs to 364 residues: Aminomethyltransferase (364 aa).

Belongs to the GcvT family. The glycine cleavage system is composed of four proteins: P, T, L and H.

The catalysed reaction is N(6)-[(R)-S(8)-aminomethyldihydrolipoyl]-L-lysyl-[protein] + (6S)-5,6,7,8-tetrahydrofolate = N(6)-[(R)-dihydrolipoyl]-L-lysyl-[protein] + (6R)-5,10-methylene-5,6,7,8-tetrahydrofolate + NH4(+). The glycine cleavage system catalyzes the degradation of glycine. The protein is Aminomethyltransferase of Shewanella sp. (strain ANA-3).